The sequence spans 1041 residues: MKTVAQIVAQNDWQNPVVFQRNRVGGHSPHHGYKTLEDALHNANAQKYLLNGEWDFCLFDAPEQVPESLLAATLSAEERAKWQSIVVPSNWQLKGYDKPIYCNVKYPFPVNPPIVPSENPTGCYRTTFSVTSAQLSQRNHIVFEGVNSAFHLWCNGEYVGYSQDSRLPAEFDISNLLVEGENRLAAMVIRWSDGSYLEDQDMWWLSGIFRDVSLITKPRQHIQDVFVTPTLDACYRDATVSVRTSIKAQLRCKVGIQLFDGDTTVTEQIVTGTNNKRVDEKGGWDDVVFQTLEVKEPKHWTAETPYLYRIVVSLIDDSGNVIDREAYNVGFRNVEMKNGQLLVNGKAVLIRGVNRHEHHQVKGHAINEDDMLEDIKLLKQNNFNAVRTAHYPNHPRWYELCDEYGLYVVDEANIETHGMFPMGRLSRDPLWAGAYMARFTQMVERDKNHPSIIIWSLGNECGHGPTHDAMYGWAKSFDPSRPVQYEGGGADTTATDIIAPMYARVDTDVEDDAVPKWAIKKWLSLPGENRPVILCEYAHAMGNSLGSFDEYWKAFKDYPRLQGGFIWDWVDQGLTKHTDSGDAFWAYGGDFGDTDNDRQFCINGLLFPDRTPHPHLFEAKYCQQHLSFSLTEETDKWQLSVKSDYLFRHTDNELLRWQVLENGKPIIEGECPIYVAPQQAQTVSIAPEINFKAGALYHLNIDVVLANDCAWAKAGHVIDTAQLALANKSGLIPFVSTANVANENAESGVTVKAENTTLLVSVKNNVFSFNSESGLLTSWLHEDSEMLSAPLEDNFFRAPLDNDIGVSEVDNPDPNAWESRWRRAGIGKWDRICTSVDVEQSTFDVRITSLFEYHYNDKLIAATKWVYTINHQAALTVEVEVLLDDSLPPMPRIGLQAAVPAPRSNEQERMRVTWQGLGPFENYPDRKAAARFGEHSLSIADLQTHYIFPTDNGLRSDCKQLNISGLRVNGQFCFSVSEYGQVQLDTAKHTSDLMPQDCVFVYIDHAHMGVGGDDSWSPSTHKAFLIEEKCYRYSVTFCAKV.

Substrate-binding residues include Asn103 and Asp201. Residue Asp201 coordinates Na(+). Residues Glu415, His417, and Glu460 each coordinate Mg(2+). Substrate is bound by residues Glu460 and Glu536–His539. The active-site Proton donor is the Glu460. Catalysis depends on Glu536, which acts as the Nucleophile. A Mg(2+)-binding site is contributed by Asn596. Na(+)-binding residues include Phe600 and Asn603. Residues Asn603 and Trp1016 each coordinate substrate.

This sequence belongs to the glycosyl hydrolase 2 family. Homotetramer. The cofactor is Mg(2+). It depends on Na(+) as a cofactor.

It carries out the reaction Hydrolysis of terminal non-reducing beta-D-galactose residues in beta-D-galactosides.. This chain is Beta-galactosidase, found in Alteromonas mediterranea (strain DSM 17117 / CIP 110805 / LMG 28347 / Deep ecotype).